The sequence spans 144 residues: 3-dehydroquinate dehydratase (144 aa).

Tyrosine 22 functions as the Proton acceptor in the catalytic mechanism. Positions 71, 77, and 84 each coordinate substrate. The active-site Proton donor is histidine 97. Residues 98 to 99 (IS) and arginine 108 contribute to the substrate site.

The protein belongs to the type-II 3-dehydroquinase family. In terms of assembly, homododecamer.

The enzyme catalyses 3-dehydroquinate = 3-dehydroshikimate + H2O. It functions in the pathway metabolic intermediate biosynthesis; chorismate biosynthesis; chorismate from D-erythrose 4-phosphate and phosphoenolpyruvate: step 3/7. Functionally, catalyzes a trans-dehydration via an enolate intermediate. This Thermotoga maritima (strain ATCC 43589 / DSM 3109 / JCM 10099 / NBRC 100826 / MSB8) protein is 3-dehydroquinate dehydratase (aroQ).